The chain runs to 380 residues: Glucose-1-phosphate adenylyltransferase (380 aa).

Alpha-D-glucose 1-phosphate is bound by residues G164, 179–180 (EK), and S190.

Belongs to the bacterial/plant glucose-1-phosphate adenylyltransferase family. In terms of assembly, homotetramer.

It carries out the reaction alpha-D-glucose 1-phosphate + ATP + H(+) = ADP-alpha-D-glucose + diphosphate. It functions in the pathway glycan biosynthesis; glycogen biosynthesis. Involved in the biosynthesis of ADP-glucose, a building block required for the elongation reactions to produce glycogen. Catalyzes the reaction between ATP and alpha-D-glucose 1-phosphate (G1P) to produce pyrophosphate and ADP-Glc. The sequence is that of Glucose-1-phosphate adenylyltransferase from Lactococcus lactis subsp. cremoris (strain SK11).